The chain runs to 277 residues: Thiazole synthase (277 aa).

Residue Lys-119 is the Schiff-base intermediate with DXP of the active site. Residues Gly-180, 206 to 207 (AG), and 228 to 229 (NT) contribute to the 1-deoxy-D-xylulose 5-phosphate site.

It belongs to the ThiG family. As to quaternary structure, homotetramer. Forms heterodimers with either ThiH or ThiS.

It is found in the plastid. The protein localises to the chloroplast. The enzyme catalyses [ThiS sulfur-carrier protein]-C-terminal-Gly-aminoethanethioate + 2-iminoacetate + 1-deoxy-D-xylulose 5-phosphate = [ThiS sulfur-carrier protein]-C-terminal Gly-Gly + 2-[(2R,5Z)-2-carboxy-4-methylthiazol-5(2H)-ylidene]ethyl phosphate + 2 H2O + H(+). It functions in the pathway cofactor biosynthesis; thiamine diphosphate biosynthesis. In terms of biological role, catalyzes the rearrangement of 1-deoxy-D-xylulose 5-phosphate (DXP) to produce the thiazole phosphate moiety of thiamine. Sulfur is provided by the thiocarboxylate moiety of the carrier protein ThiS. In vitro, sulfur can be provided by H(2)S. The sequence is that of Thiazole synthase from Porphyra purpurea (Red seaweed).